The sequence spans 191 residues: Adenylate kinase (191 aa).

10–15 serves as a coordination point for ATP; sequence GAGKGT. An NMP region spans residues 30–59; that stretch reads STGDMLRAARTSGTEMGNLVAGVMDRGELV. AMP contacts are provided by residues T31, R36, 57-59, 83-86, and Q90; these read ELV and GFPR. Residues 124 to 140 form an LID region; sequence NRAKEAAAAGQPVRADD. R125 serves as a coordination point for ATP. The AMP site is built by R137 and R148. G176 lines the ATP pocket.

It belongs to the adenylate kinase family. In terms of assembly, monomer.

The protein localises to the cytoplasm. The enzyme catalyses AMP + ATP = 2 ADP. Its pathway is purine metabolism; AMP biosynthesis via salvage pathway; AMP from ADP: step 1/1. Catalyzes the reversible transfer of the terminal phosphate group between ATP and AMP. Plays an important role in cellular energy homeostasis and in adenine nucleotide metabolism. This is Adenylate kinase from Jannaschia sp. (strain CCS1).